We begin with the raw amino-acid sequence, 436 residues long: Trigger factor (436 aa).

Residues 163 to 248 form the PPIase FKBP-type domain; sequence GDQVIIDFVG…VHSVQTKVLP (86 aa).

It belongs to the FKBP-type PPIase family. Tig subfamily.

It localises to the cytoplasm. It carries out the reaction [protein]-peptidylproline (omega=180) = [protein]-peptidylproline (omega=0). Involved in protein export. Acts as a chaperone by maintaining the newly synthesized protein in an open conformation. Functions as a peptidyl-prolyl cis-trans isomerase. The sequence is that of Trigger factor from Hydrogenovibrio crunogenus (strain DSM 25203 / XCL-2) (Thiomicrospira crunogena).